A 271-amino-acid chain; its full sequence is Homeobox protein pal-1 (271 aa).

Disordered stretches follow at residues 1–25 (MSVDVKSEFSENDSSSSSSSPTNVN), 100–135 (PPLSNGSSSSDSGMYPSPNDLTPFPSTSSGIGASSS), and 178–202 (GSAGKERRASSDTKSLPTGPGTNNV). 2 stretches are compositionally biased toward low complexity: residues 100–117 (PPLSNGSSSSDSGMYPSP) and 125–135 (STSSGIGASSS). Positions 189–202 (DTKSLPTGPGTNNV) are enriched in polar residues. A DNA-binding region (homeobox) is located at residues 207–266 (ADKYRMVYSDYQRLELEKEFHTSAFITSDRKSQLSTMLSLTERQIKIWFQNRRAKDRRDK).

Belongs to the Caudal homeobox family. As to quaternary structure, interacts with tir-1 and let-756.

The protein resides in the nucleus. It localises to the chromosome. It is found in the centromere. The protein localises to the kinetochore. Its function is as follows. Transcriptional activator. Interacts with promoter regions for tbx-8.9, tbx-9, elt-1, hnd-1, scrt-1, and vab-7 genes. Binds the sequence ATTTATGAC. Binds to the enhancer region of the hlh-1 gene promoter during embryonic body wall muscle development. Activates the gene for mab-5 in embryo development. Necessary for vab-7 expression in C blastomeres in the posterior of embryos. Required for posterior V6 neuroectoblast cell fate specification during postembryonic neurogenesis (patterning) which generates the characteristic ray lineage during male tail development. Binds to ced-3 promoter and activated expression which is crucial for tail-spike cell death. Has a role in E cell specification in endoderm development and body wall muscle development. The polypeptide is Homeobox protein pal-1 (Caenorhabditis briggsae).